The sequence spans 313 residues: 4-diphosphocytidyl-2-C-methyl-D-erythritol kinase (313 aa).

The active site involves lysine 29. Residue 113-123 (PMGGGVGGGSS) coordinates ATP. The active site involves aspartate 155.

Belongs to the GHMP kinase family. IspE subfamily.

It catalyses the reaction 4-CDP-2-C-methyl-D-erythritol + ATP = 4-CDP-2-C-methyl-D-erythritol 2-phosphate + ADP + H(+). Its pathway is isoprenoid biosynthesis; isopentenyl diphosphate biosynthesis via DXP pathway; isopentenyl diphosphate from 1-deoxy-D-xylulose 5-phosphate: step 3/6. Its function is as follows. Catalyzes the phosphorylation of the position 2 hydroxy group of 4-diphosphocytidyl-2C-methyl-D-erythritol. The protein is 4-diphosphocytidyl-2-C-methyl-D-erythritol kinase of Haemophilus influenzae (strain 86-028NP).